Here is a 63-residue protein sequence, read N- to C-terminus: Antimicrobial peptide 2 (63 aa).

The N-terminal stretch at 1–27 is a signal peptide; the sequence is MAKVPIAFLKFVIVLILFIAMSGMIEA. Cystine bridges form between cysteine 28–cysteine 45, cysteine 35–cysteine 49, and cysteine 44–cysteine 60.

This sequence belongs to the AMP family. In terms of assembly, homodimer. Seed specific.

It localises to the secreted. In terms of biological role, possesses antifungal activity and is also active on two tested Gram-positive bacteria but is non-toxic for Gram-negative bacteria and cultured human cells. In Mirabilis jalapa (Garden four-o'clock), this protein is Antimicrobial peptide 2 (AMP2).